We begin with the raw amino-acid sequence, 151 residues long: Neuroglobin (151 aa).

The Globin domain occupies 1–149; it reads MERPEHELIR…VVQAMSRGWN (149 aa). The heme b site is built by His64 and His96.

This sequence belongs to the globin family. As to quaternary structure, monomer. Homodimer and homotetramer; disulfide-linked. Mainly monomeric but also detected as part of homodimers and homotetramers. Interacts with 14-3-3 proteins; regulates the phosphorylation of NGB. Could interact (ferrous form) with G-alpha(i) proteins (GTP-bound form). Post-translationally, phosphorylated during hypoxia by ERK1/ERK2. Phosphorylation regulates the heme pocket hexacoordination preventing the association of His-64 with the heme metal center. Thereby, promotes the access of dioxygen and nitrite to the heme and stimulates the nitrite reductase activity. Phosphorylation during hypoxia is stabilized by 14-3-3 proteins.

The protein localises to the cytoplasm. It localises to the cytosol. It is found in the mitochondrion matrix. The catalysed reaction is Fe(III)-heme b-[protein] + nitric oxide + H2O = Fe(II)-heme b-[protein] + nitrite + 2 H(+). In terms of biological role, monomeric globin with a bis-histidyl six-coordinate heme-iron atom through which it can bind dioxygen, carbon monoxide and nitric oxide. Could help transport oxygen and increase its availability to the metabolically active neuronal tissues, though its low quantity in tissues as well as its high affinity for dioxygen, which may limit its oxygen-releasing ability, argue against it. The ferrous/deoxygenated form exhibits a nitrite reductase activity and it could produce nitric oxide which in turn inhibits cellular respiration in response to hypoxia. In its ferrous/deoxygenated state, it may also exhibit GDI (Guanine nucleotide Dissociation Inhibitor) activity toward heterotrimeric G-alpha proteins, thereby regulating signal transduction to facilitate neuroprotective responses in the wake of hypoxia and associated oxidative stress. The protein is Neuroglobin of Sus scrofa (Pig).